A 309-amino-acid polypeptide reads, in one-letter code: MITIVGSGRVGTAAAAIMGIMRIDKKILLIDIVKGLPQGEALDLNHMSAILGLDVEYEGSNDYKDMAGSDLVIVTAGFPRKPGMTREQLVETNAKIVSDIGKEIKKYAPDSVVILTTNPLDAMTYVMWKSTGFPRERVIGFSGVLDAGRLAYYAAKKLGISPASILPIVLGQHGESMFPVPSKSFVHGVPLSKLLSEDQLREVVEETVKAGAKITELRGFSSNWGPGAGLAIMADSVKRDARRSLIASVVLKGEYGVFDLPVEVPIVLGKTGVVKVLEIELTPEEKEKFNQSVEAIRKLVGTIPQSYLQ.

NAD(+) contacts are provided by residues 6–11 (GSGRVG) and Asp-31. The substrate site is built by Arg-80 and Arg-86. Residues Asn-93 and 116-118 (TTN) each bind NAD(+). Positions 118 and 149 each coordinate substrate. The active-site Proton acceptor is His-173.

It belongs to the LDH/MDH superfamily.

It catalyses the reaction (S)-malate + NAD(+) = oxaloacetate + NADH + H(+). Catalyzes the reversible oxidation of malate to oxaloacetate. The protein is Malate dehydrogenase (mdh) of Pyrobaculum calidifontis (strain DSM 21063 / JCM 11548 / VA1).